A 473-amino-acid chain; its full sequence is MKAHQSLHVVAGFVRFPMSKTGQSRCYSILKDISIPASKQKFVPSSGTYPKGFLAAGAHAGVKESNTQFPDVALICSETPCSAAAVFTTNKFQAAPVQVSKQVLEAREGADITGVVINSGCANAVTGKGGLEDAKSMSAKVDECNGTPSTSSKRPSTLVMSTGVIGQRLPIEKILNTIPVAHSSLSSTHKAWLTAARAICTTDTFPKLLSRTFTLPSSPNHTYRIAGMTKGAGMIHPNMATLLGILCTDVPISPAALKLLLSHAVSRSFNCISIDGDTSTNDTVALLANGAAGGQTITTPSSPNYAAMQTVLTSFAQSLAQLVVRDGEGATKFVTVRVLNSPSQADARAIASTIARSPLVKTALYGKDANWGRILCAIGYTQGIQAGTVVPERTSVSFKPVDGSEELKLLVNGEPEIVDEERAARILQDEDLEIVVDLGGGERGEEGMGGEEGIYWFCDFSHEYVTINGDYRT.

Residues Thr201, Lys230, Thr241, Glu328, Asn468, and Thr473 each coordinate substrate. The active-site Nucleophile is Thr241.

The protein belongs to the ArgJ family. As to quaternary structure, heterodimer of an alpha and a beta chain. In terms of processing, the alpha and beta chains are autoproteolytically processed from a single precursor protein within the mitochondrion.

It is found in the mitochondrion matrix. It catalyses the reaction N(2)-acetyl-L-ornithine + L-glutamate = N-acetyl-L-glutamate + L-ornithine. It carries out the reaction L-glutamate + acetyl-CoA = N-acetyl-L-glutamate + CoA + H(+). It functions in the pathway amino-acid biosynthesis; L-arginine biosynthesis; L-ornithine and N-acetyl-L-glutamate from L-glutamate and N(2)-acetyl-L-ornithine (cyclic): step 1/1. Its pathway is amino-acid biosynthesis; L-arginine biosynthesis; N(2)-acetyl-L-ornithine from L-glutamate: step 1/4. Catalyzes two activities which are involved in the cyclic version of arginine biosynthesis: the synthesis of acetylglutamate from glutamate and acetyl-CoA, and of ornithine by transacetylation between acetylornithine and glutamate. This is Arginine biosynthesis bifunctional protein ArgJ, mitochondrial from Paracoccidioides brasiliensis (strain Pb18).